Reading from the N-terminus, the 448-residue chain is tRNA modification GTPase MnmE (448 aa).

R25, E83, and K122 together coordinate (6S)-5-formyl-5,6,7,8-tetrahydrofolate. Positions 218 to 372 (GFKVAIIGKP…LTQKLQKLLD (155 aa)) constitute a TrmE-type G domain. N228 serves as a coordination point for K(+). GTP contacts are provided by residues 228-233 (NTGKSS), 247-253 (SDIAGTT), and 272-275 (DTAG). S232 provides a ligand contact to Mg(2+). K(+)-binding residues include S247, I249, and T252. T253 lines the Mg(2+) pocket. K448 contacts (6S)-5-formyl-5,6,7,8-tetrahydrofolate.

The protein belongs to the TRAFAC class TrmE-Era-EngA-EngB-Septin-like GTPase superfamily. TrmE GTPase family. In terms of assembly, homodimer. Heterotetramer of two MnmE and two MnmG subunits. The cofactor is K(+).

The protein resides in the cytoplasm. Functionally, exhibits a very high intrinsic GTPase hydrolysis rate. Involved in the addition of a carboxymethylaminomethyl (cmnm) group at the wobble position (U34) of certain tRNAs, forming tRNA-cmnm(5)s(2)U34. The chain is tRNA modification GTPase MnmE from Nitratiruptor sp. (strain SB155-2).